The chain runs to 523 residues: Coatomer subunit delta-2 (523 aa).

Residues 218–243 (DSFASKPKGRPSAAATAPGKGLGMKL) are disordered. One can recognise an MHD domain in the interval 282-523 (SDPVTVTIEE…RLVTANYQVV (242 aa)).

It belongs to the adaptor complexes medium subunit family. Delta-COP subfamily. As to quaternary structure, oligomeric complex that consists of at least the alpha, beta, beta', gamma, delta, epsilon and zeta subunits.

The protein resides in the cytoplasm. Its subcellular location is the golgi apparatus membrane. It localises to the cytoplasmic vesicle. The protein localises to the COPI-coated vesicle membrane. The coatomer is a cytosolic protein complex that binds to dilysine motifs and reversibly associates with Golgi non-clathrin-coated vesicles, which further mediate biosynthetic protein transport from the ER, via the Golgi up to the trans Golgi network. Coatomer complex is required for budding from Golgi membranes, and is essential for the retrograde Golgi-to-ER transport of dilysine-tagged proteins. This is Coatomer subunit delta-2 from Oryza sativa subsp. japonica (Rice).